Here is a 625-residue protein sequence, read N- to C-terminus: Chaperone protein HtpG (625 aa).

Residues methionine 1–arginine 330 form an a; substrate-binding region. The segment at glutamate 331 to lysine 545 is b. The interval leucine 546–histidine 625 is c.

This sequence belongs to the heat shock protein 90 family. Homodimer.

It is found in the cytoplasm. In terms of biological role, molecular chaperone. Has ATPase activity. This chain is Chaperone protein HtpG, found in Bdellovibrio bacteriovorus (strain ATCC 15356 / DSM 50701 / NCIMB 9529 / HD100).